The sequence spans 267 residues: PHD finger protein ALFIN-LIKE 7 (267 aa).

The interval 162–207 (TKVSNGSSKSNKSNPKPSKQSNSNSKPAKPPQPKDEEDSGPEGAED) is disordered. Over residues 165 to 188 (SNGSSKSNKSNPKPSKQSNSNSKP) the composition is skewed to low complexity. Residues 196–207 (DEEDSGPEGAED) are compositionally biased toward acidic residues. The PHD-type zinc-finger motif lies at 211 to 263 (AYMCGACGETYANGEFWICCDVCEKWFHGKCVRITPAKAEHIKQYKCPGCSSK).

Belongs to the Alfin family. Interacts with H3K4me3 and to a lesser extent with H3K4me2.

Its subcellular location is the nucleus. Histone-binding component that specifically recognizes H3 tails trimethylated on 'Lys-4' (H3K4me3), which mark transcription start sites of virtually all active genes. In Oryza sativa subsp. indica (Rice), this protein is PHD finger protein ALFIN-LIKE 7.